A 236-amino-acid polypeptide reads, in one-letter code: CD81 antigen (236 aa).

Residues 1 to 12 (MGVEGCTKCIKY) are Cytoplasmic-facing. A helical membrane pass occupies residues 13–33 (LLFVFNFVFWLAGGVILGVAL). The Extracellular portion of the chain corresponds to 34–63 (WLRHDPQTTNLLYLELGDKPAPNTFYVGIY). A helical membrane pass occupies residues 64-84 (ILIAVGAVMMFVGFLGCYGAI). Residues 85-89 (QESQC) are Cytoplasmic-facing. Residues 90–112 (LLGTFFTCLVILFACEVAAGIWG) traverse the membrane as a helical segment. The Extracellular portion of the chain corresponds to 113-201 (FVNKDQIAKD…QKIDELFSGK (89 aa)). Cystine bridges form between C156/C190 and C157/C175. A helical transmembrane segment spans residues 202-224 (LYLIGIAAIVVAVIMIFEMILSM). Position 219 (E219) interacts with cholesterol. Residues 225 to 236 (VLCCGIRNSSVY) are Cytoplasmic-facing.

The protein belongs to the tetraspanin (TM4SF) family. Homodimer. Part of a complex composed of CD19, CR2/CD21, CD81 and IFITM1/CD225 in the membrane of mature B cells. Interacts (via the second extracellular domain) with CD19; this interaction is initiated early during biosynthesis in the ER and enables trafficking of only properly folded CD19. Part of a complex that includes MHC class II/HLA-DR molecules and IFITM1. Interacts with IFITM1. Interacts with IFITM2 and IFITM3. Part of integrin-tetraspanin complex composed of CD9, CD81, beta-1 and beta-2 integrins in the membrane of monocyte/macrophages. Interacts (via the second extracellular domain) with integrin ITGAV:ITGB3. Interacts with CD247/CD3 zeta, ICAM1 and CD9 at the immune synapse on T cell membrane. Part of a GPCR-tetraspanin complex consisting at least of ADGRG1, CD81, possibly CD9, and GNA11 in which CD81 enhances the association of ADGRG1 with GNA11. Part of a complex composed of CD9, CD81, PTGFRN and IGSF8. Interacts directly with IGSF8. Interacts with CD53 and SCIMP. Interacts with SAMHD1 (via its C-terminus). Interacts with glypican GPC3 and with the transcriptional repressor HHEX; binding to GPC3 decreases the availability of free CD81 for binding to HHEX, resulting in nuclear translocation of HHEX and transcriptional repression. Interacts with CLDN1. Interacts with CLDN6 and CLDN9. In terms of processing, not glycosylated. Likely constitutively palmitoylated at low levels. Protein palmitoylation is up-regulated upon coligation of BCR and CD9-C2R-CD81 complexes in lipid rafts.

The protein localises to the cell membrane. The protein resides in the basolateral cell membrane. Structural component of specialized membrane microdomains known as tetraspanin-enriched microdomains (TERMs), which act as platforms for receptor clustering and signaling. Essential for trafficking and compartmentalization of CD19 receptor on the surface of activated B cells. Upon initial encounter with microbial pathogens, enables the assembly of CD19-CR2/CD21 and B cell receptor (BCR) complexes at signaling TERMs, lowering the threshold dose of antigen required to trigger B cell clonal expansion and antibody production. In T cells, facilitates the localization of CD247/CD3 zeta at antigen-induced synapses with B cells, providing for costimulation and polarization toward T helper type 2 phenotype. Present in MHC class II compartments, may also play a role in antigen presentation. Can act both as positive and negative regulator of homotypic or heterotypic cell-cell fusion processes. Positively regulates sperm-egg fusion and may be involved in acrosome reaction. In myoblasts, associates with CD9 and PTGFRN and inhibits myotube fusion during muscle regeneration. In macrophages, associates with CD9 and beta-1 and beta-2 integrins, and prevents macrophage fusion into multinucleated giant cells specialized in ingesting complement-opsonized large particles. Also prevents the fusion of mononuclear cell progenitors into osteoclasts in charge of bone resorption. May regulate the compartmentalization of enzymatic activities. In T cells, defines the subcellular localization of dNTPase SAMHD1 and permits its degradation by the proteasome, thereby controlling intracellular dNTP levels. Also involved in cell adhesion and motility. Positively regulates integrin-mediated adhesion of macrophages, particularly relevant for the inflammatory response in the lung. The sequence is that of CD81 antigen (CD81) from Chlorocebus aethiops (Green monkey).